Reading from the N-terminus, the 460-residue chain is uncharacterized protein (460 aa).

The tat-type signal signal peptide spans 1–33 (MKESNSRREFLSQSGKMVTAAALFGTSVPLAHA).

It belongs to the metallo-dependent hydrolases superfamily. In terms of processing, exported by the Tat system. The position of the signal peptide cleavage has not been experimentally proven. Can also be exported by the Sec system.

This is an uncharacterized protein from Escherichia coli (strain K12).